Reading from the N-terminus, the 588-residue chain is Proline--tRNA ligase (588 aa).

This sequence belongs to the class-II aminoacyl-tRNA synthetase family. ProS type 1 subfamily. In terms of assembly, homodimer.

The protein localises to the cytoplasm. It carries out the reaction tRNA(Pro) + L-proline + ATP = L-prolyl-tRNA(Pro) + AMP + diphosphate. Functionally, catalyzes the attachment of proline to tRNA(Pro) in a two-step reaction: proline is first activated by ATP to form Pro-AMP and then transferred to the acceptor end of tRNA(Pro). As ProRS can inadvertently accommodate and process non-cognate amino acids such as alanine and cysteine, to avoid such errors it has two additional distinct editing activities against alanine. One activity is designated as 'pretransfer' editing and involves the tRNA(Pro)-independent hydrolysis of activated Ala-AMP. The other activity is designated 'posttransfer' editing and involves deacylation of mischarged Ala-tRNA(Pro). The misacylated Cys-tRNA(Pro) is not edited by ProRS. The sequence is that of Proline--tRNA ligase from Corynebacterium glutamicum (strain ATCC 13032 / DSM 20300 / JCM 1318 / BCRC 11384 / CCUG 27702 / LMG 3730 / NBRC 12168 / NCIMB 10025 / NRRL B-2784 / 534).